The primary structure comprises 647 residues: DNA mismatch repair protein MutL (647 aa).

The protein belongs to the DNA mismatch repair MutL/HexB family.

Functionally, this protein is involved in the repair of mismatches in DNA. It is required for dam-dependent methyl-directed DNA mismatch repair. May act as a 'molecular matchmaker', a protein that promotes the formation of a stable complex between two or more DNA-binding proteins in an ATP-dependent manner without itself being part of a final effector complex. This Bacillus cereus (strain ATCC 10987 / NRS 248) protein is DNA mismatch repair protein MutL.